Reading from the N-terminus, the 317-residue chain is Protein-L-isoaspartate O-methyltransferase (317 aa).

Ser59 is a catalytic residue.

Belongs to the methyltransferase superfamily. L-isoaspartyl/D-aspartyl protein methyltransferase family. In terms of assembly, monomer.

The protein resides in the cytoplasm. It carries out the reaction [protein]-L-isoaspartate + S-adenosyl-L-methionine = [protein]-L-isoaspartate alpha-methyl ester + S-adenosyl-L-homocysteine. Catalyzes the methyl esterification of L-isoaspartyl residues in peptides and proteins that result from spontaneous decomposition of normal L-aspartyl and L-asparaginyl residues. It plays a role in the repair and/or degradation of damaged proteins. The chain is Protein-L-isoaspartate O-methyltransferase (pcm) from Thermotoga maritima (strain ATCC 43589 / DSM 3109 / JCM 10099 / NBRC 100826 / MSB8).